A 100-amino-acid chain; its full sequence is uncharacterized protein (100 aa).

2 consecutive transmembrane segments (helical) span residues 30–50 and 69–89; these read FHIP…PLAF and FLLI…LPFF.

The protein localises to the cytoplasm. Its subcellular location is the nucleus membrane. This is an uncharacterized protein from Schizosaccharomyces pombe (strain 972 / ATCC 24843) (Fission yeast).